Consider the following 130-residue polypeptide: Small ribosomal subunit protein uS8 (130 aa).

Belongs to the universal ribosomal protein uS8 family. As to quaternary structure, part of the 30S ribosomal subunit. Contacts proteins S5 and S12.

In terms of biological role, one of the primary rRNA binding proteins, it binds directly to 16S rRNA central domain where it helps coordinate assembly of the platform of the 30S subunit. In Actinobacillus pleuropneumoniae serotype 5b (strain L20), this protein is Small ribosomal subunit protein uS8.